A 342-amino-acid polypeptide reads, in one-letter code: Isopentenyl-diphosphate delta-isomerase (342 aa).

A substrate-binding site is contributed by 11–12 (RK). Residues S68, 69–71 (SMT), S99, and N128 each bind FMN. Residue 99–101 (SQR) coordinates substrate. Residue Q162 coordinates substrate. Residue E163 participates in Mg(2+) binding. FMN is bound by residues K194, S219, T224, 275 to 277 (GVR), and 296 to 297 (AK).

This sequence belongs to the IPP isomerase type 2 family. Homooctamer. Dimer of tetramers. FMN serves as cofactor. It depends on NADPH as a cofactor. Requires Mg(2+) as cofactor.

The protein resides in the cytoplasm. It carries out the reaction isopentenyl diphosphate = dimethylallyl diphosphate. Involved in the biosynthesis of isoprenoids. Catalyzes the 1,3-allylic rearrangement of the homoallylic substrate isopentenyl (IPP) to its allylic isomer, dimethylallyl diphosphate (DMAPP). This Legionella pneumophila (strain Lens) protein is Isopentenyl-diphosphate delta-isomerase.